The chain runs to 199 residues: Transgelin-2 (199 aa).

A2 carries the N-acetylalanine modification. S11 is modified (phosphoserine). Residues K17 and K20 each carry the N6-acetyllysine modification. The region spanning 24–136 (ADLEQILIQW…RTLMNLGGLA (113 aa)) is the Calponin-homology (CH) domain. The residue at position 163 (S163) is a Phosphoserine. K171 is covalently cross-linked (Glycyl lysine isopeptide (Lys-Gly) (interchain with G-Cter in SUMO2)). Residues 174-199 (IGLQMGTNRGASQAGMTGYGMPRQIL) form a Calponin-like repeat. Position 180 is a phosphothreonine (T180). R182 and R196 each carry omega-N-methylarginine.

Belongs to the calponin family.

This is Transgelin-2 (Tagln2) from Mus musculus (Mouse).